We begin with the raw amino-acid sequence, 260 residues long: 3'-5' ssDNA/RNA exonuclease TatD (260 aa).

E91, H127, and H152 together coordinate a divalent metal cation.

This sequence belongs to the metallo-dependent hydrolases superfamily. TatD-type hydrolase family. TatD subfamily. Monomer. Mg(2+) is required as a cofactor.

It is found in the cytoplasm. Functionally, 3'-5' exonuclease that prefers single-stranded DNA and RNA. May play a role in the H(2)O(2)-induced DNA damage repair. The protein is 3'-5' ssDNA/RNA exonuclease TatD of Citrobacter koseri (strain ATCC BAA-895 / CDC 4225-83 / SGSC4696).